The primary structure comprises 115 residues: Non-specific lipid-transfer protein 4.3 (115 aa).

Residues 1–25 (MARAAATQLVLVAMVAAMLLVATDA) form the signal peptide. 4 disulfide bridges follow: Cys-29–Cys-77, Cys-39–Cys-54, Cys-55–Cys-97, and Cys-75–Cys-111.

The protein belongs to the plant LTP family.

Functionally, plant non-specific lipid-transfer proteins transfer phospholipids as well as galactolipids across membranes. May play a role in wax or cutin deposition in the cell walls of expanding epidermal cells and certain secretory tissues. This Hordeum vulgare (Barley) protein is Non-specific lipid-transfer protein 4.3 (LTP4.3).